Reading from the N-terminus, the 222-residue chain is Small ribosomal subunit protein uS3 (222 aa).

The KH type-2 domain occupies 39–108; it reads IRKFIKKELF…NVLINIVEVK (70 aa).

It belongs to the universal ribosomal protein uS3 family. In terms of assembly, part of the 30S ribosomal subunit. Forms a tight complex with proteins S10 and S14.

In terms of biological role, binds the lower part of the 30S subunit head. Binds mRNA in the 70S ribosome, positioning it for translation. The chain is Small ribosomal subunit protein uS3 from Clostridium perfringens (strain ATCC 13124 / DSM 756 / JCM 1290 / NCIMB 6125 / NCTC 8237 / Type A).